We begin with the raw amino-acid sequence, 314 residues long: tRNA dimethylallyltransferase (314 aa).

Residue 12–19 (GPTASGKT) coordinates ATP. 14–19 (TASGKT) serves as a coordination point for substrate. Interaction with substrate tRNA regions lie at residues 37–40 (DSAL), 161–165 (QRIQR), and 244–249 (RCVGYR).

It belongs to the IPP transferase family. As to quaternary structure, monomer. It depends on Mg(2+) as a cofactor.

It catalyses the reaction adenosine(37) in tRNA + dimethylallyl diphosphate = N(6)-dimethylallyladenosine(37) in tRNA + diphosphate. Its function is as follows. Catalyzes the transfer of a dimethylallyl group onto the adenine at position 37 in tRNAs that read codons beginning with uridine, leading to the formation of N6-(dimethylallyl)adenosine (i(6)A). This is tRNA dimethylallyltransferase from Janthinobacterium sp. (strain Marseille) (Minibacterium massiliensis).